The chain runs to 901 residues: Protein translocase subunit SecA (901 aa).

Residues Gln87, 105 to 109 (GEGKT), and Asp512 contribute to the ATP site. The segment at 839 to 901 (QMEEQRRQES…KYKQCHGRLA (63 aa)) is disordered. Basic and acidic residues predominate over residues 841–850 (EEQRRQESER). Cys885, Cys887, Cys896, and His897 together coordinate Zn(2+). Basic residues predominate over residues 891 to 901 (KKYKQCHGRLA).

It belongs to the SecA family. In terms of assembly, monomer and homodimer. Part of the essential Sec protein translocation apparatus which comprises SecA, SecYEG and auxiliary proteins SecDF-YajC and YidC. Zn(2+) serves as cofactor.

The protein localises to the cell inner membrane. Its subcellular location is the cytoplasm. The enzyme catalyses ATP + H2O + cellular proteinSide 1 = ADP + phosphate + cellular proteinSide 2.. Functionally, part of the Sec protein translocase complex. Interacts with the SecYEG preprotein conducting channel. Has a central role in coupling the hydrolysis of ATP to the transfer of proteins into and across the cell membrane, serving both as a receptor for the preprotein-SecB complex and as an ATP-driven molecular motor driving the stepwise translocation of polypeptide chains across the membrane. This Erwinia tasmaniensis (strain DSM 17950 / CFBP 7177 / CIP 109463 / NCPPB 4357 / Et1/99) protein is Protein translocase subunit SecA.